The chain runs to 365 residues: MKLSDFDFDLPSELIAQYPSSERDNSDLLIAVTPPIKTKFYNIIDYLKEGDLLVFNNSKVIKAQLNLGKNITINLNQKLSDDSWSAFAKPARKLHVNDEFYFDNHKVIITEKLAMGEIKVKFKLNDISVFEFLNKYGEMPLPVYIRRSHSLCHPVATTTGSKTYLNNDWIPWSNHGMTNTQNDNDRYQTVYSQIEGSVAAPTAGLHFTKDILDKLKAEGIQATFLTLHVGAGTFLPVKTENIHEHKMHTEYCSITPDTAEIINKAKQEGKRIIAVGTTTLRTLESSCNNGIVKAGSFKTDIFITPGFKFQTADMLLTNFHFPKSTLFMLICAFAGFKEMHELYKYAIKEAMRFFSYGDATLLCRK.

This sequence belongs to the QueA family. As to quaternary structure, monomer.

It is found in the cytoplasm. The enzyme catalyses 7-aminomethyl-7-carbaguanosine(34) in tRNA + S-adenosyl-L-methionine = epoxyqueuosine(34) in tRNA + adenine + L-methionine + 2 H(+). It functions in the pathway tRNA modification; tRNA-queuosine biosynthesis. Its function is as follows. Transfers and isomerizes the ribose moiety from AdoMet to the 7-aminomethyl group of 7-deazaguanine (preQ1-tRNA) to give epoxyqueuosine (oQ-tRNA). The protein is S-adenosylmethionine:tRNA ribosyltransferase-isomerase of Rickettsia rickettsii (strain Iowa).